A 126-amino-acid polypeptide reads, in one-letter code: UPF0325 protein PBPRA2971 (126 aa).

The protein belongs to the UPF0325 family.

The sequence is that of UPF0325 protein PBPRA2971 from Photobacterium profundum (strain SS9).